A 689-amino-acid chain; its full sequence is Chloride channel protein ClC-Kb (689 aa).

The Cytoplasmic portion of the chain corresponds to 1 to 51 (MSRVLVIEQREGEEKTLIQKHIFRPFPNTRRVVIDHLQRLKNFLFRIGDDW). A run of 2 helical transmembrane segments spans residues 52–83 (YFLF…RWLQ) and 92–112 (LRYL…TGFA). An intramembrane region (helical) is located at residues 117–128 (PHSGGSGIPELK). Chloride is bound at residue serine 122. The next 2 membrane-spanning stretches (helical) occupy residues 142-161 (IKNF…AGST) and 162-181 (MFLG…AAYL). Asparagine 194 is a glycosylation site (N-linked (GlcNAc...) asparagine). Residues 204–225 (AAAAVGVSTVFGAPISGVLFSV) constitute an intramembrane region (helical). The helical transmembrane segment at 237–256 (YWRGFFAATCGAFVFRLLAV) threads the bilayer. Residues glutamate 260, glutamate 262, aspartate 279, and glutamate 282 each contribute to the Ca(2+) site. 2 helical membrane-spanning segments follow: residues 283–311 (MFFF…LGYV) and 326–343 (PMYS…TFPE). Residues 350–361 (ASRLTMKELLTS) constitute an intramembrane region (helical). A run of 2 helical transmembrane segments spans residues 402–422 (GTLA…TTLP) and 423–442 (MPAG…GRLV). Phenylalanine 428 lines the chloride pocket. An intramembrane region (helical) is located at residues 466–498 (GGYAWQGAPAYSGAVTHSVSTALLAFEATGQIA). The chain crosses the membrane as a helical span at residues 502 to 522 (PVILCVLIANAFTQKLQPSFY). Residues 523-689 (DGTIIVKKLP…KAIEDLANPK (167 aa)) lie on the Cytoplasmic side of the membrane. 2 CBS domains span residues 553–613 (MNPD…SHER) and 630–689 (ACSI…ANPK).

This sequence belongs to the chloride channel (TC 2.A.49) family. In terms of processing, N-glycosylated on a single asparagine, probably Asn-365 or Asn-375. As to expression, expressed in two distinct regions of the kidney; the proximal convoluted tubule and the diluting segment.

It localises to the cell membrane. Its function is as follows. Voltage-gated chloride channel. Chloride channels have several functions including the regulation of cell volume, the stabilization of membrane potential, signal transduction and transepithelial transport. The polypeptide is Chloride channel protein ClC-Kb (clcnkb) (Xenopus laevis (African clawed frog)).